Here is a 397-residue protein sequence, read N- to C-terminus: L-aspartate--L-methionine ligase (397 aa).

In terms of domain architecture, ATP-grasp spans 131–347 (VALNNKARIP…FFNTILKYVK (217 aa)). ADP contacts are provided by lysine 136, valine 171, lysine 173, glycine 183, valine 186, isoleucine 188, glutamate 215, glutamine 216, isoleucine 218, asparagine 223, and threonine 246. Aspartate 288 is a Mg(2+) binding site. Residues leucine 290 and isoleucine 300 each coordinate ADP. Residue aspartate 301 participates in Mg(2+) binding. Residue arginine 305 is the Critical for catalysis of the active site.

As to quaternary structure, primarily a monomer in solution. Minor homodimer formation. It depends on Mg(2+) as a cofactor.

It catalyses the reaction L-aspartate + L-methionine + ATP = L-aspartyl-L-methionine + ADP + phosphate + H(+). Its pathway is amino-acid metabolism. In terms of biological role, L-amino acid ligase, which preferentially catalyzes the formation of L-aspartyl-L-methionine dipeptide from L-aspartate and L-methionine in the presence of ATP. Less active with L-asparagine and L-methionine as substrates. Less active with L-aspartate and either L-phenylalanine, L-valine, L-leucine or L-isoleucine as substrates. Decreased activity when L-methionine is substituted with seleno-DL-methionine, L-homocysteine, L-methionine sulfoxide, L-methionine sulfoximine and o-acetyl-L-serine. Decreased activity with acetylation of L-methionine amino group. Decreased activity by modification of L-methionine carboxylate to L-methionine methyl ester. No activity when L-methionine is substituted with L-homoserine. No activity with formylation of L-methionine amino group. No activity by modification of L-methionine carboxylate to L-methionine-glycine carboxylate. No activity when L-aspartate substrate is replaced by analogs such as L-homoserine, DL-aspartate beta-methyl ester, L-glutamate or o-acetyl-L-serine. No activity when L-aspartate amino and alpha-carboxylate groups are modified to L-malate, glycine-L-aspartate, L-aspartate-glycine or N-carbamoyl-DL-aspartate. No activity with L-methionine or L-aspartate as sole substrates. No activity in presence of other nucleoside triphosphates including GTP, CTP, UTP, TTP or ITP. Involved in sulfur amino acid metabolism. The protein is L-aspartate--L-methionine ligase of Staphylococcus aureus (strain NCTC 8325 / PS 47).